The sequence spans 182 residues: Bifunctional protein PyrR (182 aa).

Residues V100–T112 carry the PRPP-binding motif.

Belongs to the purine/pyrimidine phosphoribosyltransferase family. PyrR subfamily. As to quaternary structure, homodimer and homohexamer; in equilibrium.

The catalysed reaction is UMP + diphosphate = 5-phospho-alpha-D-ribose 1-diphosphate + uracil. Its function is as follows. Regulates transcriptional attenuation of the pyrimidine nucleotide (pyr) operon by binding in a uridine-dependent manner to specific sites on pyr mRNA. This disrupts an antiterminator hairpin in the RNA and favors formation of a downstream transcription terminator, leading to a reduced expression of downstream genes. Also displays a weak uracil phosphoribosyltransferase activity which is not physiologically significant. The protein is Bifunctional protein PyrR of Natranaerobius thermophilus (strain ATCC BAA-1301 / DSM 18059 / JW/NM-WN-LF).